Reading from the N-terminus, the 235-residue chain is Aspartate/glutamate leucyltransferase (235 aa).

The protein belongs to the R-transferase family. Bpt subfamily.

It is found in the cytoplasm. The enzyme catalyses N-terminal L-glutamyl-[protein] + L-leucyl-tRNA(Leu) = N-terminal L-leucyl-L-glutamyl-[protein] + tRNA(Leu) + H(+). The catalysed reaction is N-terminal L-aspartyl-[protein] + L-leucyl-tRNA(Leu) = N-terminal L-leucyl-L-aspartyl-[protein] + tRNA(Leu) + H(+). Its function is as follows. Functions in the N-end rule pathway of protein degradation where it conjugates Leu from its aminoacyl-tRNA to the N-termini of proteins containing an N-terminal aspartate or glutamate. This Pseudomonas fluorescens (strain Pf0-1) protein is Aspartate/glutamate leucyltransferase.